The following is a 160-amino-acid chain: Complexin-4 (160 aa).

The segment at 14–44 is disordered; sequence KNLGFGGGSEEKKEEGGTSDPAAAKGMTREE. Cys157 carries the post-translational modification Cysteine methyl ester. Residue Cys157 is the site of S-farnesyl cysteine attachment. A propeptide spans 158–160 (removed in mature form); the sequence is SVM.

It belongs to the complexin/synaphin family. Weakly binds to the SNARE core complex containing SNAP25, VAMP2 and STX1A. Farnesylation mediates presynaptic targeting and is important for function in neurotransmitter release. As to expression, present specifically in the retina (at protein level). Expressed in the outer nuclear layer of the retina (at protein level). Strongly expressed at rod photoreceptor ribbon synapses (at protein level). Not expressed at conventional amacrine cell synapses, nor at cone photoreceptor ribbon synapses (at protein level). Weakly expressed at cone photoreceptor synaptic terminals (at protein level). Not expressed in the brain (at protein level).

The protein resides in the synapse. The protein localises to the cell membrane. Its function is as follows. Complexin that regulates SNARE protein complex-mediated synaptic vesicle fusion. Required for the maintenance of synaptic ultrastructure in the adult retina. Positively regulates synaptic transmission through synaptic vesicle availability and exocytosis of neurotransmitters at photoreceptor ribbon synapses in the retina. Suppresses tonic photoreceptor activity and baseline 'noise' by suppression of Ca(2+) vesicle tonic release and the facilitation of evoked synchronous and asynchronous Ca(2+) vesicle release. The polypeptide is Complexin-4 (Cplx4) (Mus musculus (Mouse)).